Reading from the N-terminus, the 146-residue chain is Hemoglobin subunit beta-1/2 (146 aa).

Valine 1 is subject to N-acetylvaline. The Globin domain maps to 2–146 (HLTPDEKNAV…VATALAHKYH (145 aa)). Serine 44 is modified (phosphoserine). Residue lysine 59 is modified to N6-acetyllysine. 2 residues coordinate heme b: histidine 63 and histidine 92. Cysteine 93 carries the S-nitrosocysteine modification. Position 144 is an N6-acetyllysine (lysine 144).

It belongs to the globin family. In terms of assembly, heterotetramer of two alpha chains and two beta chains. Red blood cells.

In terms of biological role, involved in oxygen transport from the lung to the various peripheral tissues. The sequence is that of Hemoglobin subunit beta-1/2 (HBB) from Otolemur crassicaudatus (Brown greater galago).